Consider the following 575-residue polypeptide: Beta-amylase 1, chloroplastic (575 aa).

Residues 1–41 (MALNLSHQLGVLAGTPIKSGEMTDSSLLSISPPSARMMTPK) constitute a chloroplast transit peptide. Serine 55 and serine 59 each carry phosphoserine. Cysteines 73 and 511 form a disulfide. Residues aspartate 147, histidine 187, and aspartate 195 each coordinate substrate. The Proton donor role is filled by glutamate 279. Residues lysine 392, histidine 397, and threonine 439 each contribute to the substrate site. The active-site Proton acceptor is glutamate 477. Substrate-binding positions include 478 to 479 (NA) and arginine 517.

This sequence belongs to the glycosyl hydrolase 14 family. In terms of tissue distribution, expressed in leaves, roots, flowers, pollen, and seeds.

The protein localises to the plastid. It is found in the chloroplast. It carries out the reaction Hydrolysis of (1-&gt;4)-alpha-D-glucosidic linkages in polysaccharides so as to remove successive maltose units from the non-reducing ends of the chains.. Its activity is regulated as follows. Redox regulation; active in reducing conditions, inactive in oxidizing conditions. Thioredoxins f1, m1, and y1 mediate the reversible reductive activation of oxidized BAM1. Beta-amylase activity. Can use p-nitrophenyl maltopentaoside (PNPG5) as substrate only in reduced form. Can play a minor role in the starch degradation and maltose metabolism in chloroplasts during the night. More active on phosphorylated glucan. Interacts directly with starch or other alpha-1,4-glucan. This chain is Beta-amylase 1, chloroplastic (BAM1), found in Arabidopsis thaliana (Mouse-ear cress).